Consider the following 91-residue polypeptide: UPF0213 protein NGO_1598 (91 aa).

In terms of domain architecture, GIY-YIG spans 4-83; sequence SNWSVYLILC…AAQKRQLWEQ (80 aa).

It belongs to the UPF0213 family.

In Neisseria gonorrhoeae (strain ATCC 700825 / FA 1090), this protein is UPF0213 protein NGO_1598.